We begin with the raw amino-acid sequence, 265 residues long: uncharacterized protein (265 aa).

The signal sequence occupies residues 1-23 (MNYFRILYCSVLLFFSFFSCTSA). The NodB homology domain maps to 67–248 (KEIYLTFDNG…TLKQQGYTFK (182 aa)).

It belongs to the polysaccharide deacetylase family.

This is an uncharacterized protein from Geobacillus stearothermophilus (Bacillus stearothermophilus).